The sequence spans 504 residues: Signal recognition particle receptor FtsY (504 aa).

Disordered regions lie at residues 1 to 71 and 116 to 135; these read MFNW…DDYL and ESDQATATEADLPSPETEIT. GTP-binding positions include 308–315, 391–395, and 455–458; these read GVNGAGKT, DTAGR, and TKLD.

Belongs to the GTP-binding SRP family. FtsY subfamily. In terms of assembly, part of the signal recognition particle protein translocation system, which is composed of SRP and FtsY.

It localises to the cell inner membrane. It is found in the cytoplasm. The enzyme catalyses GTP + H2O = GDP + phosphate + H(+). Functionally, involved in targeting and insertion of nascent membrane proteins into the cytoplasmic membrane. Acts as a receptor for the complex formed by the signal recognition particle (SRP) and the ribosome-nascent chain (RNC). This Synechocystis sp. (strain ATCC 27184 / PCC 6803 / Kazusa) protein is Signal recognition particle receptor FtsY.